A 361-amino-acid polypeptide reads, in one-letter code: Beta-hexosaminidase (361 aa).

Substrate-binding positions include D69, R77, R144, and 174 to 175 (KH). The Proton donor/acceptor role is filled by H187. D258 (nucleophile) is an active-site residue.

It belongs to the glycosyl hydrolase 3 family. NagZ subfamily.

It localises to the cytoplasm. The catalysed reaction is Hydrolysis of terminal non-reducing N-acetyl-D-hexosamine residues in N-acetyl-beta-D-hexosaminides.. The protein operates within cell wall biogenesis; peptidoglycan recycling. Functionally, plays a role in peptidoglycan recycling by cleaving the terminal beta-1,4-linked N-acetylglucosamine (GlcNAc) from peptide-linked peptidoglycan fragments, giving rise to free GlcNAc, anhydro-N-acetylmuramic acid and anhydro-N-acetylmuramic acid-linked peptides. This Neisseria meningitidis serogroup C / serotype 2a (strain ATCC 700532 / DSM 15464 / FAM18) protein is Beta-hexosaminidase.